A 349-amino-acid chain; its full sequence is Anthranilate phosphoribosyltransferase (349 aa).

Residues Gly82, 85 to 86 (GD), 92 to 95 (NVSS), 110 to 118 (KHGNRAVSG), and Ser122 contribute to the 5-phospho-alpha-D-ribose 1-diphosphate site. Gly82 provides a ligand contact to anthranilate. Ser94 lines the Mg(2+) pocket. Asn113 is an anthranilate binding site. Position 168 (Arg168) interacts with anthranilate. The Mg(2+) site is built by Asp227 and Glu228.

The protein belongs to the anthranilate phosphoribosyltransferase family. Homodimer. The cofactor is Mg(2+).

It carries out the reaction N-(5-phospho-beta-D-ribosyl)anthranilate + diphosphate = 5-phospho-alpha-D-ribose 1-diphosphate + anthranilate. Its pathway is amino-acid biosynthesis; L-tryptophan biosynthesis; L-tryptophan from chorismate: step 2/5. In terms of biological role, catalyzes the transfer of the phosphoribosyl group of 5-phosphorylribose-1-pyrophosphate (PRPP) to anthranilate to yield N-(5'-phosphoribosyl)-anthranilate (PRA). In Pseudomonas paraeruginosa (strain DSM 24068 / PA7) (Pseudomonas aeruginosa (strain PA7)), this protein is Anthranilate phosphoribosyltransferase.